Consider the following 221-residue polypeptide: CASP-like protein 4C1 (221 aa).

The tract at residues 1–21 is disordered; the sequence is MDSPESSDRGLNPMTPDHGGH. The Cytoplasmic segment spans residues 1–54; it reads MDSPESSDRGLNPMTPDHGGHNGKVVHYFGQGVEGGPASPRKLGHGHLHPKANT. Residues 55–75 traverse the membrane as a helical segment; that stretch reads ALLLLRLLTFAFSLASLVIMA. At 76–101 the chain is on the extracellular side; it reads TNSATTTATAGRHRTVNWVDFDTYRY. A helical transmembrane segment spans residues 102–122; sequence VLAACAIVCLYSFAEIGLGLW. The Cytoplasmic portion of the chain corresponds to 123 to 144; sequence YLLKGRMVMPESMAHWFDFGHD. Residues 145 to 165 form a helical membrane-spanning segment; the sequence is QGFAYLIFSACSGATAVAHNL. Residues 166 to 189 are Extracellular-facing; it reads RERHILIHGMYGCDEANSFCMKAE. Residues 190–210 traverse the membrane as a helical segment; sequence ISIGLAFGAFLFIALSSLLSG. Residues 211-221 lie on the Cytoplasmic side of the membrane; that stretch reads YRLVKWLILGP.

This sequence belongs to the Casparian strip membrane proteins (CASP) family. In terms of assembly, homodimer and heterodimers.

Its subcellular location is the cell membrane. This is CASP-like protein 4C1 from Pteridium aquilinum subsp. aquilinum (Bracken fern).